A 387-amino-acid chain; its full sequence is Phosphoglycerate kinase (387 aa).

Substrate contacts are provided by residues 21 to 23 (DLN), Arg-36, 59 to 62 (HLGR), Arg-113, and Arg-146. ATP contacts are provided by residues Lys-197, Glu-314, and 340-343 (GGDT).

It belongs to the phosphoglycerate kinase family. In terms of assembly, monomer.

The protein resides in the cytoplasm. It catalyses the reaction (2R)-3-phosphoglycerate + ATP = (2R)-3-phospho-glyceroyl phosphate + ADP. Its pathway is carbohydrate degradation; glycolysis; pyruvate from D-glyceraldehyde 3-phosphate: step 2/5. The polypeptide is Phosphoglycerate kinase (Pseudomonas putida (strain ATCC 47054 / DSM 6125 / CFBP 8728 / NCIMB 11950 / KT2440)).